Consider the following 646-residue polypeptide: Threonine--tRNA ligase (646 aa).

One can recognise a TGS domain in the interval 1–63 (MAQISLTFPD…ETDAKIAIHT (63 aa)). The segment at 247–544 (DHRKLGREME…LIENYAGKLP (298 aa)) is catalytic. Zn(2+) contacts are provided by Cys-344, His-395, and His-521.

The protein belongs to the class-II aminoacyl-tRNA synthetase family. As to quaternary structure, homodimer. It depends on Zn(2+) as a cofactor.

The protein resides in the cytoplasm. It carries out the reaction tRNA(Thr) + L-threonine + ATP = L-threonyl-tRNA(Thr) + AMP + diphosphate + H(+). In terms of biological role, catalyzes the attachment of threonine to tRNA(Thr) in a two-step reaction: L-threonine is first activated by ATP to form Thr-AMP and then transferred to the acceptor end of tRNA(Thr). Also edits incorrectly charged L-seryl-tRNA(Thr). This is Threonine--tRNA ligase from Cereibacter sphaeroides (strain ATCC 17023 / DSM 158 / JCM 6121 / CCUG 31486 / LMG 2827 / NBRC 12203 / NCIMB 8253 / ATH 2.4.1.) (Rhodobacter sphaeroides).